A 420-amino-acid polypeptide reads, in one-letter code: Reticulon-4 receptor-like 2 (420 aa).

The signal sequence occupies residues 1-30 (MLPGLRRLLQGPASACLLLTLLALPSVTPS). 2 disulfides stabilise this stretch: Cys-31–Cys-37 and Cys-35–Cys-46. Positions 31–60 (CPMLCTCYSSPPTVSCQANNFSSVPLSLPP) constitute an LRRNT domain. N-linked (GlcNAc...) asparagine glycosylation occurs at Asn-50. LRR repeat units follow at residues 61-82 (STQR…TFGP), 83-104 (NLLT…TFRH), 107-129 (ALEE…TFQG), 132-153 (RLQS…IFRG), 156-177 (SLQY…LFAD), 180-201 (NLSH…VFRG), 204-225 (SLDR…AFHG), and 228-249 (RLTI…ALAD). Asn-93 carries an N-linked (GlcNAc...) asparagine glycan. An N-linked (GlcNAc...) asparagine glycan is attached at Asn-236. One can recognise an LRRCT domain in the interval 261–312 (NPWACDCRARPLWAWFQRARVSSSDVTCATPPERQGRDLRALRDSDFQACPP). 2 disulfides stabilise this stretch: Cys-265–Cys-288 and Cys-267–Cys-310. Positions 286–399 (VTCATPPERQ…CQAPADSRGP (114 aa)) are disordered. Over residues 294–306 (RQGRDLRALRDSD) the composition is skewed to basic and acidic residues. Residues 315 to 327 (PTRPGSRARGNSS) are important for interaction with MAG. A compositionally biased stretch (basic and acidic residues) spans 351–360 (LPAEDSRGRQ). Residue Gly-398 is the site of GPI-anchor amidated glycine attachment. Positions 399–420 (PALSAGLRTPLLCLLPLALHHL) are cleaved as a propeptide — removed in mature form.

Belongs to the Nogo receptor family. In terms of assembly, interaction with MAG is controversial, and may be indirect. Interacts with MAG. Does not interact with OMG and RTN4. Post-translationally, undergoes zinc metalloproteinase-mediated ectodomain shedding in neuroblastoma cells; is released both as a full-length ectodomain and an N-terminal fragment containing the leucine-rich repeat (LRR) region of the protein. N-glycosylated. As to expression, detected in brain. Detected in hippocampus neurons (at protein level).

The protein localises to the cell membrane. It localises to the membrane raft. The protein resides in the cell projection. Its subcellular location is the dendrite. It is found in the axon. The protein localises to the perikaryon. Functionally, cell surface receptor that plays a functionally redundant role in the inhibition of neurite outgrowth mediated by MAG. Plays a functionally redundant role in postnatal brain development. Contributes to normal axon migration across the brain midline and normal formation of the corpus callosum. Does not seem to play a significant role in regulating axon regeneration in the adult central nervous system. Protects motoneurons against apoptosis; protection against apoptosis is probably mediated by MAG. Like other family members, plays a role in restricting the number dendritic spines and the number of synapses that are formed during brain development. Signaling mediates activation of Rho and downstream reorganization of the actin cytoskeleton. The chain is Reticulon-4 receptor-like 2 from Mus musculus (Mouse).